A 1069-amino-acid polypeptide reads, in one-letter code: Kinesin-like protein vab-8 (1069 aa).

One can recognise a Kinesin motor domain in the interval 15 to 325 (PLRTIPKLRL…ACKIARTRVK (311 aa)). Disordered stretches follow at residues 328 to 374 (MGHG…LESG), 391 to 436 (SRTT…KSSP), and 572 to 598 (EQEE…RILS). Interaction with unc-51 stretches follow at residues 331–517 (GRKP…KSKY) and 517–719 (YNLD…TVVD). Composition is skewed to low complexity over residues 339–364 (SSGT…GTPR) and 391–407 (SRTT…TPTS). An interaction with unc-73 region spans residues 403 to 877 (STPTSIRPLH…SAERDRKTSK (475 aa)). Positions 719 to 769 (DWSQIERKKEREKDAMEEEKRKEVLRERRAKLKITELEIKRERNMIDKELD) form a coiled coil. The tract at residues 786 to 960 (SLSPCRGGRT…RQSYSASSGY (175 aa)) is disordered. Over residues 824–847 (GGSLAKLSASGASGSGPPSSPSLG) the composition is skewed to low complexity. Residues 883 to 897 (SSKERRSSGSKEELQ) are compositionally biased toward basic and acidic residues. Residues 906–928 (TSPKTYGGPGTSSSGRGSSAPGS) are compositionally biased toward low complexity. Residues 938–960 (TEKTANGTMPRSKRQSYSASSGY) are compositionally biased toward polar residues. The stretch at 990 to 1027 (LVRQADEIRHRQWQLKKELEEAKRAIGQEEDAKMIANS) forms a coiled coil.

It belongs to the TRAFAC class myosin-kinesin ATPase superfamily. Kinesin family. KIF26 subfamily. In terms of assembly, interacts with unc-51 and unc-73. Post-translationally, phosphorylated by unc-51.

It localises to the cytoplasm. Its subcellular location is the cytoskeleton. Required for posterior migration of cells and axon growth cones during nervous system assembly. In PLM neuron, regulates innexin unc-9 gap junction turnover by suppressing unc-9 transport out of the gap junctions. In Caenorhabditis briggsae, this protein is Kinesin-like protein vab-8 (vab-8).